A 137-amino-acid polypeptide reads, in one-letter code: Allergen Ste b 1 (137 aa).

Residues 1-18 form the signal peptide; sequence ALFAAAGLAAAAPFETRQ. The AA1-like domain occupies 28–137; it reads QGDYVWKISE…PKDVICQGAS (110 aa). Cystine bridges form between Cys67-Cys82 and Cys121-Cys133.

The protein belongs to the ALTA1 family. Homodimer; disulfide-linked.

It localises to the secreted. The protein is Allergen Ste b 1 (alta1) of Stemphylium botryosum (Black stalk rot fungus).